A 152-amino-acid chain; its full sequence is MSEKYIVTWDMLQIHARKLASRLMPSEQWKGIIAVSRGGLVPGALLARELGIRHVDTVCISSYDHDNQRELKVLKCAEGDGEGFIVIDDLVDTGGTAVAIREMYPKAHFVTIFAKPAGRPLVDDYVVDIPQDTWIEQPWDMGVVFVPPISGR.

Residues 37 to 38, R69, and 88 to 96 contribute to the 5-phospho-alpha-D-ribose 1-diphosphate site; these read RG and DDLVDTGGT. R69 is a binding site for GMP. Position 89 (D89) interacts with Mg(2+). 2 residues coordinate guanine: D92 and I135. Residues D92 and I135 each coordinate xanthine. GMP is bound by residues 92 to 96 and 134 to 135; these read DTGGT and WI.

It belongs to the purine/pyrimidine phosphoribosyltransferase family. XGPT subfamily. In terms of assembly, homotetramer. Mg(2+) is required as a cofactor.

It localises to the cell inner membrane. The enzyme catalyses GMP + diphosphate = guanine + 5-phospho-alpha-D-ribose 1-diphosphate. The catalysed reaction is XMP + diphosphate = xanthine + 5-phospho-alpha-D-ribose 1-diphosphate. It carries out the reaction IMP + diphosphate = hypoxanthine + 5-phospho-alpha-D-ribose 1-diphosphate. Its pathway is purine metabolism; GMP biosynthesis via salvage pathway; GMP from guanine: step 1/1. The protein operates within purine metabolism; XMP biosynthesis via salvage pathway; XMP from xanthine: step 1/1. Functionally, purine salvage pathway enzyme that catalyzes the transfer of the ribosyl-5-phosphate group from 5-phospho-alpha-D-ribose 1-diphosphate (PRPP) to the N9 position of the 6-oxopurines guanine and xanthine to form the corresponding ribonucleotides GMP (guanosine 5'-monophosphate) and XMP (xanthosine 5'-monophosphate), with the release of PPi. To a lesser extent, also acts on hypoxanthine. This chain is Xanthine-guanine phosphoribosyltransferase, found in Shigella boydii serotype 18 (strain CDC 3083-94 / BS512).